Reading from the N-terminus, the 252-residue chain is Triosephosphate isomerase (252 aa).

9–11 contributes to the substrate binding site; sequence NWK. His96 serves as the catalytic Electrophile. The active-site Proton acceptor is the Glu166. Substrate contacts are provided by residues Gly172, Ser212, and 233–234; that span reads GG.

Belongs to the triosephosphate isomerase family. Homodimer.

It is found in the cytoplasm. The enzyme catalyses D-glyceraldehyde 3-phosphate = dihydroxyacetone phosphate. It participates in carbohydrate biosynthesis; gluconeogenesis. Its pathway is carbohydrate degradation; glycolysis; D-glyceraldehyde 3-phosphate from glycerone phosphate: step 1/1. Involved in the gluconeogenesis. Catalyzes stereospecifically the conversion of dihydroxyacetone phosphate (DHAP) to D-glyceraldehyde-3-phosphate (G3P). The sequence is that of Triosephosphate isomerase from Prosthecochloris aestuarii (strain DSM 271 / SK 413).